The following is a 210-amino-acid chain: Isomeliandiol synthase ISM1 (210 aa).

A run of 5 helical transmembrane segments spans residues 17–37, 50–70, 107–127, 135–155, and 172–192; these read FTLH…TWFI, LLCW…YFVF, IEGM…YAIV, ILQF…FLTA, and YYVG…INFW. One can recognise an EXPERA domain in the interval 46–188; that stretch reads GDRLLLCWWA…IWIIVPSLIA (143 aa).

The protein belongs to the EBP family.

It is found in the membrane. The enzyme catalyses 7,8-epoxymelianol = isomeliandiol. Its pathway is secondary metabolite biosynthesis; terpenoid biosynthesis. Functionally, isomerase involved in the biosynthesis of limonoids and quassinoids triterpene natural products such as ailanthone, chaparrinone, glaucarubinone and amarolide, allelopathic degraded triterpene lactones inhibiting the growth of other plants, and possessing antimalarial, antifeedant, insecticidal, anti-inflammatory and anticancer activities. Catalyzes the conversion of 7,8-epoxymelianol to isomeliandiol via skeletal rearrangements. This chain is Isomeliandiol synthase ISM1, found in Ailanthus altissima (Tree-of-heaven).